The chain runs to 554 residues: Glucose-6-phosphate isomerase (554 aa).

The Proton donor role is filled by E359. Residues H390 and K518 contribute to the active site.

It belongs to the GPI family.

Its subcellular location is the cytoplasm. The enzyme catalyses alpha-D-glucose 6-phosphate = beta-D-fructose 6-phosphate. It participates in carbohydrate biosynthesis; gluconeogenesis. It functions in the pathway carbohydrate degradation; glycolysis; D-glyceraldehyde 3-phosphate and glycerone phosphate from D-glucose: step 2/4. Functionally, catalyzes the reversible isomerization of glucose-6-phosphate to fructose-6-phosphate. This is Glucose-6-phosphate isomerase from Pseudomonas fluorescens (strain ATCC BAA-477 / NRRL B-23932 / Pf-5).